A 388-amino-acid chain; its full sequence is Succinate--CoA ligase [ADP-forming] subunit beta (388 aa).

The 236-residue stretch at 9 to 244 folds into the ATP-grasp domain; the sequence is KQLFARYGLP…QSQEDPREAQ (236 aa). ATP contacts are provided by residues lysine 46, 53–55, glutamate 99, threonine 102, and glutamate 107; that span reads GRG. Mg(2+) contacts are provided by asparagine 199 and aspartate 213. Residues asparagine 264 and 321–323 each bind substrate; that span reads GIV.

This sequence belongs to the succinate/malate CoA ligase beta subunit family. Heterotetramer of two alpha and two beta subunits. The cofactor is Mg(2+).

It catalyses the reaction succinate + ATP + CoA = succinyl-CoA + ADP + phosphate. The catalysed reaction is GTP + succinate + CoA = succinyl-CoA + GDP + phosphate. It participates in carbohydrate metabolism; tricarboxylic acid cycle; succinate from succinyl-CoA (ligase route): step 1/1. Its function is as follows. Succinyl-CoA synthetase functions in the citric acid cycle (TCA), coupling the hydrolysis of succinyl-CoA to the synthesis of either ATP or GTP and thus represents the only step of substrate-level phosphorylation in the TCA. The beta subunit provides nucleotide specificity of the enzyme and binds the substrate succinate, while the binding sites for coenzyme A and phosphate are found in the alpha subunit. The polypeptide is Succinate--CoA ligase [ADP-forming] subunit beta (Salmonella arizonae (strain ATCC BAA-731 / CDC346-86 / RSK2980)).